A 245-amino-acid polypeptide reads, in one-letter code: MKVSLFSTCLVDVFEKRVGIATVELLEKLGCEVDFPAAQVCCGQPAYNSGYHEETKKAAKNMIKAFEQSEVVVAPSGSCVTMFKHYPDLFKNDAKWQARAQELADKTYEVTQFIVEVLGITNVGAKLDGVATIHPSCHMTRLLGNVTAPAKLLNEVEGLEVVELPKYYNCCGFGGTFAVKMSDVSGEMVDEKVDCIVESGADYLVGGDCSCLMNIDGRLRRRGVDVKAVHIIEILNNQVEAVTTR.

This sequence belongs to the LutA/YkgE family.

In terms of biological role, is involved in L-lactate degradation and allows cells to grow with lactate as the sole carbon source. The sequence is that of Lactate utilization protein A from Macrococcus caseolyticus (strain JCSC5402) (Macrococcoides caseolyticum).